Reading from the N-terminus, the 343-residue chain is Ubiquitin thioesterase OTU1 (343 aa).

The UBX-like stretch occupies residues 45–123 (RCKAKGGTHL…IVEEDQTRPK (79 aa)). The OTU domain maps to 144 to 269 (LTRTAVPADN…GIHYDPLQRN (126 aa)). The tract at residues 149-155 (VPADNSC) is cys-loop. Residue D152 is part of the active site. The active-site Nucleophile is C155. The tract at residues 208–218 (IRRDDTWGGAI) is variable-loop. The his-loop stretch occupies residues 258–262 (YDGIH). Residue I261 coordinates substrate. Residue H262 is part of the active site. The S2 site stretch occupies residues 286–291 (DIVLVQ). The C2H2-type zinc-finger motif lies at 313 to 337 (LRCMICQKGLTGQAEARDHARETGH). Residue H337 is part of the active site.

In terms of assembly, interacts with VCP; the interaction is direct. Interacts with FAF2/UBXD8. Interacts with DERL1; however interaction is dependent on the UBAX-like region, suggesting that it may be indirect. Interacts with PLAA, UBXN6 and VCP; may form a complex involved in macroautophagy.

The protein resides in the cytoplasm. The enzyme catalyses Thiol-dependent hydrolysis of ester, thioester, amide, peptide and isopeptide bonds formed by the C-terminal Gly of ubiquitin (a 76-residue protein attached to proteins as an intracellular targeting signal).. Functionally, hydrolase that can remove conjugated ubiquitin from proteins and participates in endoplasmic reticulum-associated degradation (ERAD) for misfolded lumenal proteins. May act by triming the ubiquitin chain on the associated substrate to facilitate their threading through the VCP/p97 pore. Ubiquitin moieties on substrates may present a steric impediment to the threading process when the substrate is transferred to the VCP pore and threaded through VCP's axial channel. Mediates deubiquitination of 'Lys-27'-, 'Lys-29'- and 'Lys-33'-linked polyubiquitin chains. Also able to hydrolyze 'Lys-11'-linked ubiquitin chains. Cleaves both polyubiquitin and di-ubiquitin. May play a role in macroautophagy, regulating for instance the clearance of damaged lysosomes. May recruit PLAA, UBXN6 and VCP to damaged lysosome membranes decorated with K48-linked ubiquitin chains and remove these chains allowing autophagosome formation. This is Ubiquitin thioesterase OTU1 (Yod1) from Mus musculus (Mouse).